The following is a 165-amino-acid chain: U11/U12 small nuclear ribonucleoprotein 25 kDa protein (165 aa).

Positions 52–137 (MRLSVVKLDG…IRNNSQVTFM (86 aa)) constitute a Ubiquitin-like domain. Residues 145–165 (RGRHSKRKKHRLFRSLHKTSS) are disordered.

In terms of assembly, component of the U11/U12 snRNPs that are part of the U12-type spliceosome.

It localises to the nucleus. The protein is U11/U12 small nuclear ribonucleoprotein 25 kDa protein (SNRNP25) of Arabidopsis thaliana (Mouse-ear cress).